Here is a 110-residue protein sequence, read N- to C-terminus: MMEVTAKLRGAAISAQKARLVADLIRGKSVAHALNILNFSNKKAAVLVKKALESAIANAEHNNSLDVDDLKVSTIYVDEGMSLKRIMPRAKGRADRITKRTCHITVKVGV.

This sequence belongs to the universal ribosomal protein uL22 family. As to quaternary structure, part of the 50S ribosomal subunit.

Its function is as follows. This protein binds specifically to 23S rRNA; its binding is stimulated by other ribosomal proteins, e.g. L4, L17, and L20. It is important during the early stages of 50S assembly. It makes multiple contacts with different domains of the 23S rRNA in the assembled 50S subunit and ribosome. In terms of biological role, the globular domain of the protein is located near the polypeptide exit tunnel on the outside of the subunit, while an extended beta-hairpin is found that lines the wall of the exit tunnel in the center of the 70S ribosome. This chain is Large ribosomal subunit protein uL22, found in Acinetobacter baumannii (strain ACICU).